A 367-amino-acid polypeptide reads, in one-letter code: Palmitoyltransferase ZDHHC2 (367 aa).

At 1 to 16 (MAPSGPGSSARRRCRR) the chain is on the cytoplasmic side. Residues 17-37 (VLYWIPVVFITLLLGWSYYAY) traverse the membrane as a helical segment. The Lumenal segment spans residues 38–54 (AIQLCIVSMENTGEQVV). The helical transmembrane segment at 55 to 75 (CLMAYHLLFAMFVWSYWKTIF) threads the bilayer. The Cytoplasmic portion of the chain corresponds to 76–170 (TLPMNPSKEF…NNCVGFSNYK (95 aa)). A DHHC domain is found at 127–177 (RYCDRCQLIKPDRCHHCSVCDKCILKMDHHCPWVNNCVGFSNYKFFLLFLA). Cysteine 157 acts as the S-palmitoyl cysteine intermediate in catalysis. The helical transmembrane segment at 171–191 (FFLLFLAYSLLYCLFIAATDL) threads the bilayer. The Lumenal portion of the chain corresponds to 192 to 208 (QYFIKFWTNGLPDTQAK). Residues 209–229 (FHIMFLFFAAAMFSVSLSSLF) traverse the membrane as a helical segment. Over 230–367 (GYHCWLVSKN…NPALTMENET (138 aa)) the chain is Cytoplasmic. A mediates localization to plasma membrane and recycling endosomes region spans residues 299–367 (NQDPEQASTP…NPALTMENET (69 aa)). The disordered stretch occupies residues 330 to 367 (ESQSHLLTDSQSWTESSINPGKCKAGMSNPALTMENET). Polar residues predominate over residues 333–348 (SHLLTDSQSWTESSIN). The Non-canonical dileucine endocytic signal motif lies at 335-336 (LL). Residue serine 341 is modified to Phosphoserine. Positions 358 to 361 (NPAL) match the NPxY-like endocytic signal motif.

This sequence belongs to the DHHC palmitoyltransferase family. In terms of assembly, monomer. Homodimer. The monomeric form has a higher catalytic activity. Post-translationally, autopalmitoylated. In terms of tissue distribution, ubiquitously expressed. Reduced expression in colorectal cancers with liver metastasis.

The protein resides in the postsynaptic density. Its subcellular location is the postsynaptic recycling endosome membrane. The protein localises to the cell membrane. It is found in the endoplasmic reticulum membrane. It localises to the golgi apparatus membrane. The enzyme catalyses L-cysteinyl-[protein] + hexadecanoyl-CoA = S-hexadecanoyl-L-cysteinyl-[protein] + CoA. It carries out the reaction L-cysteinyl-[protein] + tetradecanoyl-CoA = S-tetradecanoyl-L-cysteinyl-[protein] + CoA. It catalyses the reaction L-cysteinyl-[protein] + octadecanoyl-CoA = S-octadecanoyl-L-cysteinyl-[protein] + CoA. Palmitoyltransferase that catalyzes the addition of palmitate onto various protein substrates and is involved in a variety of cellular processes. Has no stringent fatty acid selectivity and in addition to palmitate can also transfer onto target proteins myristate from tetradecanoyl-CoA and stearate from octadecanoyl-CoA. In the nervous system, plays a role in long term synaptic potentiation by palmitoylating AKAP5 through which it regulates protein trafficking from the dendritic recycling endosomes to the plasma membrane and controls both structural and functional plasticity at excitatory synapses. In dendrites, mediates the palmitoylation of DLG4 when synaptic activity decreases and induces synaptic clustering of DLG4 and associated AMPA-type glutamate receptors. Also mediates the de novo and turnover palmitoylation of RGS7BP, a shuttle for Gi/o-specific GTPase-activating proteins/GAPs, promoting its localization to the plasma membrane in response to the activation of G protein-coupled receptors. Through the localization of these GTPase-activating proteins/GAPs, it also probably plays a role in G protein-coupled receptors signaling in neurons. Also probably plays a role in cell adhesion by palmitoylating CD9 and CD151 to regulate their expression and function. Palmitoylates the endoplasmic reticulum protein CKAP4 and regulates its localization to the plasma membrane. Could also palmitoylate LCK and regulate its localization to the plasma membrane. Functionally, (Microbial infection) Promotes Chikungunya virus (CHIKV) replication by mediating viral nsp1 palmitoylation. The protein is Palmitoyltransferase ZDHHC2 of Homo sapiens (Human).